The chain runs to 426 residues: Mitochondrial distribution and morphology protein 12 (426 aa).

An SMP-LTD domain is found at 1–426 (MSIEVDWKTA…VFPSFWTFLI (426 aa)). Disordered stretches follow at residues 88-147 (AHGN…GTPG), 185-264 (WTDH…FRFP), and 346-370 (ADDQETRDKDDHPRSGLDPTTSPKR). Over residues 96-109 (THSELNEPPYRDEV) the composition is skewed to basic and acidic residues. Low complexity predominate over residues 216-236 (SSNPTSRPSTSSTLPSHPSGS). Composition is skewed to basic and acidic residues over residues 244–264 (SHPEEEHLDDPAEPDHPFRFP) and 349–360 (QETRDKDDHPRS).

It belongs to the MDM12 family. In terms of assembly, component of the ER-mitochondria encounter structure (ERMES) or MDM complex, composed of mmm1, mdm10, mdm12 and mdm34. A mmm1 homodimer associates with one molecule of mdm12 on each side in a pairwise head-to-tail manner, and the SMP-LTD domains of mmm1 and mdm12 generate a continuous hydrophobic tunnel for phospholipid trafficking.

The protein localises to the mitochondrion outer membrane. It localises to the endoplasmic reticulum membrane. Component of the ERMES/MDM complex, which serves as a molecular tether to connect the endoplasmic reticulum (ER) and mitochondria. Components of this complex are involved in the control of mitochondrial shape and protein biogenesis, and function in nonvesicular lipid trafficking between the ER and mitochondria. Mdm12 is required for the interaction of the ER-resident membrane protein mmm1 and the outer mitochondrial membrane-resident beta-barrel protein mdm10. The mdm12-mmm1 subcomplex functions in the major beta-barrel assembly pathway that is responsible for biogenesis of all mitochondrial outer membrane beta-barrel proteins, and acts in a late step after the SAM complex. The mdm10-mdm12-mmm1 subcomplex further acts in the TOM40-specific pathway after the action of the mdm12-mmm1 complex. Essential for establishing and maintaining the structure of mitochondria and maintenance of mtDNA nucleoids. The sequence is that of Mitochondrial distribution and morphology protein 12 from Aspergillus terreus (strain NIH 2624 / FGSC A1156).